Here is a 242-residue protein sequence, read N- to C-terminus: MKILIPTAKEMNTDLPSIETTLLRSESQAVLDALALYSASQLESFYKVSAEKAAEECQNIQALKRQTAQHYPALKLFDGLMYRHIKRDKLTEVEQAYLENHVFITSALYGVVPALSPMAPHRLDFLMKLKVAGKTLKSHWKAAYDEAVKQEEVIFSLLSSEFETVFSKEIRAKMVTFKFMEDRGGQLKIHSTISKKARGAFLTALIENQVQTVGEARRLNFAGFVYREDLSQPQGLVFVKEV.

This sequence belongs to the UPF0246 family.

The polypeptide is UPF0246 protein SPN23F15130 (Streptococcus pneumoniae (strain ATCC 700669 / Spain 23F-1)).